Here is a 1491-residue protein sequence, read N- to C-terminus: Chromosome partition protein MukB (1491 aa).

34–41 is an ATP binding site; it reads GGNGAGKS. 6 coiled-coil regions span residues 302 to 418, 488 to 600, 638 to 666, 781 to 806, 836 to 1109, and 1210 to 1239; these read LIEQ…QYQQ, EVAR…RFES, ELEK…RLAS, RAAR…AKAS, EQAL…DLRT, and VEAI…ISSD. The flexible hinge stretch occupies residues 667-784; the sequence is PGGSNDPRLK…AIPLFGRAAR (118 aa). The tract at residues 1059 to 1080 is disordered; it reads QRRRDELQERLHTSRSRKSEYE.

This sequence belongs to the SMC family. MukB subfamily. As to quaternary structure, homodimerization via its hinge domain. Binds to DNA via its C-terminal region. Interacts, and probably forms a ternary complex, with MukE and MukF via its C-terminal region. The complex formation is stimulated by calcium or magnesium. Interacts with tubulin-related protein FtsZ.

Its subcellular location is the cytoplasm. The protein resides in the nucleoid. In terms of biological role, plays a central role in chromosome condensation, segregation and cell cycle progression. Functions as a homodimer, which is essential for chromosome partition. Involved in negative DNA supercoiling in vivo, and by this means organize and compact chromosomes. May achieve or facilitate chromosome segregation by condensation DNA from both sides of a centrally located replisome during cell division. The protein is Chromosome partition protein MukB of Vibrio cholerae serotype O1 (strain ATCC 39541 / Classical Ogawa 395 / O395).